A 573-amino-acid polypeptide reads, in one-letter code: 60 kDa heat shock protein, mitochondrial (573 aa).

Residues 1–26 constitute a mitochondrion transit peptide; the sequence is MLRLPAVLRQIRPVSRALAPHLTRAY. ATP contacts are provided by residues lysine 75 and 111 to 115; that span reads DGTTT. Tyrosine 227 is modified (phosphotyrosine). ATP-binding residues include glycine 440 and aspartate 520.

It is found in the mitochondrion matrix. The catalysed reaction is ATP + H2O + a folded polypeptide = ADP + phosphate + an unfolded polypeptide.. Functionally, chaperonin implicated in mitochondrial protein import and macromolecular assembly. Together with Hsp10, facilitates the correct folding of imported proteins. May also prevent misfolding and promote the refolding and proper assembly of unfolded polypeptides generated under stress conditions in the mitochondrial matrix. The functional units of these chaperonins consist of heptameric rings of the large subunit Hsp60, which function as a back-to-back double ring. In a cyclic reaction, Hsp60 ring complexes bind one unfolded substrate protein per ring, followed by the binding of ATP and association with 2 heptameric rings of the co-chaperonin Hsp10. This leads to sequestration of the substrate protein in the inner cavity of Hsp60 where, for a certain period of time, it can fold undisturbed by other cell components. Synchronous hydrolysis of ATP in all Hsp60 subunits results in the dissociation of the chaperonin rings and the release of ADP and the folded substrate protein. The protein is 60 kDa heat shock protein, mitochondrial of Gallus gallus (Chicken).